Consider the following 190-residue polypeptide: Potassium-transporting ATPase KdpC subunit (190 aa).

A helical membrane pass occupies residues 10–30 (TFLFLLLITGGVYPLLTTALG).

It belongs to the KdpC family. The system is composed of three essential subunits: KdpA, KdpB and KdpC.

Its subcellular location is the cell inner membrane. Its function is as follows. Part of the high-affinity ATP-driven potassium transport (or Kdp) system, which catalyzes the hydrolysis of ATP coupled with the electrogenic transport of potassium into the cytoplasm. This subunit acts as a catalytic chaperone that increases the ATP-binding affinity of the ATP-hydrolyzing subunit KdpB by the formation of a transient KdpB/KdpC/ATP ternary complex. This Escherichia coli (strain SMS-3-5 / SECEC) protein is Potassium-transporting ATPase KdpC subunit.